Reading from the N-terminus, the 421-residue chain is Peptide chain release factor subunit 1 (421 aa).

Belongs to the eukaryotic release factor 1 family. Heterodimer of two subunits, one of which binds GTP.

Its subcellular location is the cytoplasm. Functionally, directs the termination of nascent peptide synthesis (translation) in response to the termination codons UAA, UAG and UGA. The polypeptide is Peptide chain release factor subunit 1 (prf1) (Methanocaldococcus jannaschii (strain ATCC 43067 / DSM 2661 / JAL-1 / JCM 10045 / NBRC 100440) (Methanococcus jannaschii)).